The primary structure comprises 379 residues: Protein-glutamate methylesterase/protein-glutamine glutaminase (379 aa).

Residues 4-121 (KILVVDDSIF…AANRQDAVAL (118 aa)) form the Response regulatory domain. Asp55 carries the 4-aspartylphosphate modification. A CheB-type methylesterase domain is found at 186 to 379 (SGKKYRCLAI…FESHILKEMA (194 aa)). Catalysis depends on residues Ser198, His225, and Asp323.

Belongs to the CheB family. Post-translationally, phosphorylated by CheA. Phosphorylation of the N-terminal regulatory domain activates the methylesterase activity.

The protein localises to the cytoplasm. The enzyme catalyses [protein]-L-glutamate 5-O-methyl ester + H2O = L-glutamyl-[protein] + methanol + H(+). It catalyses the reaction L-glutaminyl-[protein] + H2O = L-glutamyl-[protein] + NH4(+). Functionally, involved in chemotaxis. Part of a chemotaxis signal transduction system that modulates chemotaxis in response to various stimuli. Catalyzes the demethylation of specific methylglutamate residues introduced into the chemoreceptors (methyl-accepting chemotaxis proteins or MCP) by CheR. Also mediates the irreversible deamidation of specific glutamine residues to glutamic acid. The chain is Protein-glutamate methylesterase/protein-glutamine glutaminase from Pseudoalteromonas atlantica (strain T6c / ATCC BAA-1087).